Consider the following 419-residue polypeptide: UDP-N-acetylglucosamine 1-carboxyvinyltransferase (419 aa).

Residue 22–23 coordinates phosphoenolpyruvate; that stretch reads KN. Residue arginine 93 coordinates UDP-N-acetyl-alpha-D-glucosamine. Cysteine 117 (proton donor) is an active-site residue. Residue cysteine 117 is modified to 2-(S-cysteinyl)pyruvic acid O-phosphothioketal. Aspartate 306 and isoleucine 328 together coordinate UDP-N-acetyl-alpha-D-glucosamine.

This sequence belongs to the EPSP synthase family. MurA subfamily.

The protein resides in the cytoplasm. It carries out the reaction phosphoenolpyruvate + UDP-N-acetyl-alpha-D-glucosamine = UDP-N-acetyl-3-O-(1-carboxyvinyl)-alpha-D-glucosamine + phosphate. The protein operates within cell wall biogenesis; peptidoglycan biosynthesis. Functionally, cell wall formation. Adds enolpyruvyl to UDP-N-acetylglucosamine. This is UDP-N-acetylglucosamine 1-carboxyvinyltransferase from Vesicomyosocius okutanii subsp. Calyptogena okutanii (strain HA).